Reading from the N-terminus, the 461-residue chain is Bifunctional protein GlmU (461 aa).

The tract at residues 1 to 229 (MNKYVVILAA…FSESLGVNDR (229 aa)) is pyrophosphorylase. UDP-N-acetyl-alpha-D-glucosamine is bound by residues 8 to 11 (LAAG), K22, Q72, and 77 to 78 (GT). D102 contributes to the Mg(2+) binding site. Residues G139, E154, N169, and N227 each contribute to the UDP-N-acetyl-alpha-D-glucosamine site. Position 227 (N227) interacts with Mg(2+). The interval 230 to 250 (IALAQATKIMQRRINEEHMRN) is linker. The segment at 251 to 461 (GVSFIDPDTA…LPLAKDKEWE (211 aa)) is N-acetyltransferase. The UDP-N-acetyl-alpha-D-glucosamine site is built by R332 and K350. H362 (proton acceptor) is an active-site residue. 2 residues coordinate UDP-N-acetyl-alpha-D-glucosamine: Y365 and N376. Acetyl-CoA contacts are provided by residues 385–386 (NY), A422, and R439.

The protein in the N-terminal section; belongs to the N-acetylglucosamine-1-phosphate uridyltransferase family. It in the C-terminal section; belongs to the transferase hexapeptide repeat family. Homotrimer. Mg(2+) is required as a cofactor.

It is found in the cytoplasm. The enzyme catalyses alpha-D-glucosamine 1-phosphate + acetyl-CoA = N-acetyl-alpha-D-glucosamine 1-phosphate + CoA + H(+). It catalyses the reaction N-acetyl-alpha-D-glucosamine 1-phosphate + UTP + H(+) = UDP-N-acetyl-alpha-D-glucosamine + diphosphate. The protein operates within nucleotide-sugar biosynthesis; UDP-N-acetyl-alpha-D-glucosamine biosynthesis; N-acetyl-alpha-D-glucosamine 1-phosphate from alpha-D-glucosamine 6-phosphate (route II): step 2/2. It participates in nucleotide-sugar biosynthesis; UDP-N-acetyl-alpha-D-glucosamine biosynthesis; UDP-N-acetyl-alpha-D-glucosamine from N-acetyl-alpha-D-glucosamine 1-phosphate: step 1/1. Its pathway is bacterial outer membrane biogenesis; LPS lipid A biosynthesis. In terms of biological role, catalyzes the last two sequential reactions in the de novo biosynthetic pathway for UDP-N-acetylglucosamine (UDP-GlcNAc). The C-terminal domain catalyzes the transfer of acetyl group from acetyl coenzyme A to glucosamine-1-phosphate (GlcN-1-P) to produce N-acetylglucosamine-1-phosphate (GlcNAc-1-P), which is converted into UDP-GlcNAc by the transfer of uridine 5-monophosphate (from uridine 5-triphosphate), a reaction catalyzed by the N-terminal domain. This chain is Bifunctional protein GlmU, found in Lactobacillus johnsonii (strain CNCM I-12250 / La1 / NCC 533).